We begin with the raw amino-acid sequence, 216 residues long: Thiopurine S-methyltransferase (216 aa).

Residues Trp11, Leu46, Glu67, and Arg122 each coordinate S-adenosyl-L-methionine.

It belongs to the class I-like SAM-binding methyltransferase superfamily. TPMT family.

It is found in the cytoplasm. The enzyme catalyses S-adenosyl-L-methionine + a thiopurine = S-adenosyl-L-homocysteine + a thiopurine S-methylether.. This is Thiopurine S-methyltransferase from Vibrio parahaemolyticus serotype O3:K6 (strain RIMD 2210633).